The primary structure comprises 199 residues: GTP cyclohydrolase-2 (199 aa).

49 to 53 (RIHSE) provides a ligand contact to GTP. Zn(2+)-binding residues include C54, C65, and C67. GTP-binding positions include Q70, 92–94 (EGR), and T114. D126 acts as the Proton acceptor in catalysis. R128 acts as the Nucleophile in catalysis. Residues T149 and K154 each contribute to the GTP site.

It belongs to the GTP cyclohydrolase II family. Homodimer. The cofactor is Zn(2+).

The catalysed reaction is GTP + 4 H2O = 2,5-diamino-6-hydroxy-4-(5-phosphoribosylamino)-pyrimidine + formate + 2 phosphate + 3 H(+). The protein operates within cofactor biosynthesis; riboflavin biosynthesis; 5-amino-6-(D-ribitylamino)uracil from GTP: step 1/4. In terms of biological role, catalyzes the conversion of GTP to 2,5-diamino-6-ribosylamino-4(3H)-pyrimidinone 5'-phosphate (DARP), formate and pyrophosphate. This is GTP cyclohydrolase-2 from Blochmanniella floridana.